Reading from the N-terminus, the 457-residue chain is MKLLISLLWSIFFSIVYSEKTLLNFKHYELCNGIYSKSESGGSLNPAIYVNWTEPWGQEDEVEVLIFNWKEIRKLGAFRSDDQFTYICDYDAVYTDHLCEADQLGLYLWNSTSAKSIRSYIIPTNADPQNIIYEISQSGYYCIWSHSKKMLPYQALVNWQNAYGGLPASQFPRMPISGGITIAYSVILALWMFFRFQYKHSIVTVQKAIMFLLIFSCAQQAVTSIVLDTENLRNRGNFTWLGETLVSILFACQLVLDLALLLILSWGYTRYSTNMRDRLFTEAKIPLIICFFALFVVRFFAITIQSIHLGLWFCFFFLTACISALYILFGAFVALPSTLRALVEQRYYTLHSIYKIFRIMVLCGVVTIFSFSLVALIFCSNTNNNSTNKLWKIRWYFLDGWIDGVHLTYLITLSSLWRPSQENPDLDPTGLSYPVLDPRLEEELDLLEEDIRADKSK.

The signal sequence occupies residues 1-18; sequence MKLLISLLWSIFFSIVYS. Residues 19–173 are Lumenal-facing; the sequence is EKTLLNFKHY…GGLPASQFPR (155 aa). Residues 174–194 form a helical membrane-spanning segment; it reads MPISGGITIAYSVILALWMFF. Over 195–207 the chain is Cytoplasmic; the sequence is RFQYKHSIVTVQK. Residues 208–228 form a helical membrane-spanning segment; it reads AIMFLLIFSCAQQAVTSIVLD. At 229–243 the chain is on the lumenal side; it reads TENLRNRGNFTWLGE. Residues 244-264 form a helical membrane-spanning segment; sequence TLVSILFACQLVLDLALLLIL. Topologically, residues 265-284 are cytoplasmic; it reads SWGYTRYSTNMRDRLFTEAK. Residues 285–305 form a helical membrane-spanning segment; sequence IPLIICFFALFVVRFFAITIQ. The Lumenal portion of the chain corresponds to 306–314; it reads SIHLGLWFC. Residues 315–335 form a helical membrane-spanning segment; it reads FFFLTACISALYILFGAFVAL. Topologically, residues 336–358 are cytoplasmic; that stretch reads PSTLRALVEQRYYTLHSIYKIFR. A helical membrane pass occupies residues 359 to 379; that stretch reads IMVLCGVVTIFSFSLVALIFC. Residues 380–457 lie on the Lumenal side of the membrane; sequence SNTNNNSTNK…EEDIRADKSK (78 aa).

The protein belongs to the LU7TM family.

The protein localises to the endoplasmic reticulum membrane. This is an uncharacterized protein from Schizosaccharomyces pombe (strain 972 / ATCC 24843) (Fission yeast).